Here is a 72-residue protein sequence, read N- to C-terminus: Probable transcription factor elt-4 (72 aa).

The segment at 16–40 (CSNCNGTNTTLWRRKAEGDPVCNAC) adopts a GATA-type zinc-finger fold.

It is found in the nucleus. Probable transcription factor. Plays a role in regulating heme-dependent expression of heme transporter hrg-1. Modulates lifespan in a daf-16-dependent manner. This is Probable transcription factor elt-4 from Caenorhabditis elegans.